Reading from the N-terminus, the 91-residue chain is Large ribosomal subunit protein uL23c (91 aa).

It belongs to the universal ribosomal protein uL23 family. In terms of assembly, part of the 50S ribosomal subunit.

It localises to the plastid. The protein localises to the chloroplast. Binds to 23S rRNA. The sequence is that of Large ribosomal subunit protein uL23c (rpl23) from Pinus thunbergii (Japanese black pine).